The primary structure comprises 445 residues: Argininosuccinate synthase (445 aa).

Residues 17–25 (AFSGGLDTS) and A43 contribute to the ATP site. Position 99 (Y99) interacts with L-citrulline. Residues G129 and T131 each contribute to the ATP site. T131, N135, and D136 together coordinate L-aspartate. Position 135 (N135) interacts with L-citrulline. D136 contributes to the ATP binding site. 2 residues coordinate L-citrulline: R139 and S192. Position 194 (D194) interacts with ATP. L-citrulline is bound by residues T201, E203, and E280.

The protein belongs to the argininosuccinate synthase family. Type 2 subfamily. In terms of assembly, homotetramer.

It is found in the cytoplasm. It catalyses the reaction L-citrulline + L-aspartate + ATP = 2-(N(omega)-L-arginino)succinate + AMP + diphosphate + H(+). The protein operates within amino-acid biosynthesis; L-arginine biosynthesis; L-arginine from L-ornithine and carbamoyl phosphate: step 2/3. The sequence is that of Argininosuccinate synthase from Burkholderia ambifaria (strain MC40-6).